Here is a 491-residue protein sequence, read N- to C-terminus: Glutamate--tRNA ligase (491 aa).

The short motif at 13-23 is the 'HIGH' region element; the sequence is PSPTGFLHIGN. Zn(2+)-binding residues include Cys-110, Cys-112, Cys-137, and His-139. The 'KMSKS' region signature appears at 254-258; sequence KLSKR. Residue Lys-257 coordinates ATP.

Belongs to the class-I aminoacyl-tRNA synthetase family. Glutamate--tRNA ligase type 1 subfamily. As to quaternary structure, monomer. Zn(2+) is required as a cofactor.

The protein localises to the cytoplasm. The catalysed reaction is tRNA(Glu) + L-glutamate + ATP = L-glutamyl-tRNA(Glu) + AMP + diphosphate. Its function is as follows. Catalyzes the attachment of glutamate to tRNA(Glu) in a two-step reaction: glutamate is first activated by ATP to form Glu-AMP and then transferred to the acceptor end of tRNA(Glu). In Listeria welshimeri serovar 6b (strain ATCC 35897 / DSM 20650 / CCUG 15529 / CIP 8149 / NCTC 11857 / SLCC 5334 / V8), this protein is Glutamate--tRNA ligase.